Here is a 515-residue protein sequence, read N- to C-terminus: Cytoplasmic tRNA 2-thiolation protein 2 (515 aa).

Disordered stretches follow at residues 1–24 (MCQV…RPSR) and 188–217 (LGAG…ARPP). N-acetylcysteine is present on C2. Phosphoserine is present on residues S415, S419, S435, and S508.

It belongs to the CTU2/NCS2 family. As to quaternary structure, component of a complex at least composed of URM1, CTU2/NCS2 and CTU1/ATPBD3.

It localises to the cytoplasm. The protein operates within tRNA modification; 5-methoxycarbonylmethyl-2-thiouridine-tRNA biosynthesis. Its function is as follows. Plays a central role in 2-thiolation of mcm(5)S(2)U at tRNA wobble positions of tRNA(Lys), tRNA(Glu) and tRNA(Gln). May act by forming a heterodimer with CTU1/ATPBD3 that ligates sulfur from thiocarboxylated URM1 onto the uridine of tRNAs at wobble position. The chain is Cytoplasmic tRNA 2-thiolation protein 2 from Homo sapiens (Human).